The primary structure comprises 607 residues: Zinc finger CCCH domain-containing protein 66 (607 aa).

2 ANK repeats span residues 57-87 (EERT…DVNR) and 92-124 (DGAT…NPDS). Acidic residues predominate over residues 161–178 (LNEVNGQEESEPEVEVEV). The disordered stretch occupies residues 161–193 (LNEVNGQEESEPEVEVEVEVSPPRGSERKEYPV). 2 C3H1-type zinc fingers span residues 254 to 276 (PCPE…HGIF) and 284 to 308 (QYRT…HKPE). A disordered region spans residues 342-363 (ISPLPIGATTTPPLSPNGVSSP). Polar residues predominate over residues 349–361 (ATTTPPLSPNGVS).

This Arabidopsis thaliana (Mouse-ear cress) protein is Zinc finger CCCH domain-containing protein 66.